We begin with the raw amino-acid sequence, 319 residues long: MKKDDRLKKFKYKVAAFYNFISIIDEEILLIKEELTKLATNQKIKGTILLASEGVNGTICGPENAIVQFIETLEKLLKVSDINVKYSWSEKQAFRRFKARKKKEIVTIGLKEINPTKSVGKYIKAGEWNQFLEDPNSVVIDTRNEYEIKIGNFAGALNPQTSSFREFPAWVQKHLKPLIEENPSLKIGMYCTGGIRCEKATSYLIEEGFSDVHHLEGGILKYLEDVSSENSLWNGECFVFDQRVSLDHELLPGSHRMCHACGLPISPEDLKKPTYIKGLQCDACVNKFTDSDRARFAERQRQIDEIMKRLPENSIWPSS.

The 99-residue stretch at 133 to 231 folds into the Rhodanese domain; that stretch reads EDPNSVVIDT…YLEDVSSENS (99 aa). Cysteine 191 acts as the Cysteine persulfide intermediate in catalysis.

Belongs to the TrhO family.

It carries out the reaction uridine(34) in tRNA + AH2 + O2 = 5-hydroxyuridine(34) in tRNA + A + H2O. Catalyzes oxygen-dependent 5-hydroxyuridine (ho5U) modification at position 34 in tRNAs. The chain is tRNA uridine(34) hydroxylase from Prochlorococcus marinus (strain NATL2A).